Reading from the N-terminus, the 104-residue chain is Translation initiation factor 1A (104 aa).

Over residues 1–14 (MRGQQAPPQQPTRV) the composition is skewed to low complexity. Residues 1 to 20 (MRGQQAPPQQPTRVRTPREN) form a disordered region. Residues 12 to 87 (TRVRTPRENE…EKCDVIWRYT (76 aa)) form the S1-like domain.

This sequence belongs to the eIF-1A family.

Seems to be required for maximal rate of protein biosynthesis. Enhances ribosome dissociation into subunits and stabilizes the binding of the initiator Met-tRNA(I) to 40 S ribosomal subunits. The chain is Translation initiation factor 1A (eIF1A) from Methanococcus maripaludis (strain C6 / ATCC BAA-1332).